The following is a 217-amino-acid chain: Probable transaldolase (217 aa).

The active-site Schiff-base intermediate with substrate is the Lys84.

It belongs to the transaldolase family. Type 3B subfamily.

The protein resides in the cytoplasm. The catalysed reaction is D-sedoheptulose 7-phosphate + D-glyceraldehyde 3-phosphate = D-erythrose 4-phosphate + beta-D-fructose 6-phosphate. It functions in the pathway carbohydrate degradation; pentose phosphate pathway; D-glyceraldehyde 3-phosphate and beta-D-fructose 6-phosphate from D-ribose 5-phosphate and D-xylulose 5-phosphate (non-oxidative stage): step 2/3. Its function is as follows. Transaldolase is important for the balance of metabolites in the pentose-phosphate pathway. This is Probable transaldolase from Roseiflexus castenholzii (strain DSM 13941 / HLO8).